An 822-amino-acid chain; its full sequence is IQ and AAA domain-containing protein 1-like (822 aa).

The 30-residue stretch at 206-235 folds into the IQ domain; sequence QDQGAIVIQKVWKGYLQRKRIEQDRRMEME. Over residues 338-363 the composition is skewed to basic and acidic residues; sequence RQELEAQAQENKKKEQEKNKDKVKEK. Disordered regions lie at residues 338 to 378 and 457 to 484; these read RQEL…KAKK and REET…KDLT. Residues 464-479 show a composition bias toward basic residues; it reads KSPKKKGGKKSGKKKK. Position 569-576 (569-576) interacts with ATP; the sequence is GPSGMGKK.

The protein belongs to the AAA ATPase family.

In Rattus norvegicus (Rat), this protein is IQ and AAA domain-containing protein 1-like (Iqca1l).